A 350-amino-acid polypeptide reads, in one-letter code: Transmembrane protein 185A (350 aa).

A run of 7 helical transmembrane segments spans residues 16–36, 41–61, 81–101, 111–131, 177–197, 211–231, and 240–260; these read LIYA…DGII, WAVF…ASVG, FKAM…EVLV, FWLL…AACV, ILMS…VLFL, ITMA…EILL, and AFSC…LMAT. The mediates interaction with MAP1B stretch occupies residues 298 to 350; the sequence is DLHHEDNEETEETPVPEPPKIAPMFRKKARVVITQSPGKYALPPPKLNIEMPD.

The protein belongs to the TMEM185 family. Interacts with MAP1B.

The protein resides in the cell projection. The protein localises to the dendrite. It localises to the membrane. The sequence is that of Transmembrane protein 185A (TMEM185A) from Pongo abelii (Sumatran orangutan).